The following is a 504-amino-acid chain: Glycerol kinase (504 aa).

Thr12 is an ADP binding site. ATP is bound by residues Thr12, Thr13, and Ser14. A sn-glycerol 3-phosphate-binding site is contributed by Thr12. Arg16 lines the ADP pocket. Sn-glycerol 3-phosphate contacts are provided by Arg82, Glu83, Tyr134, and Asp249. Positions 82, 83, 134, 249, and 250 each coordinate glycerol. Residues Thr271 and Gly315 each contribute to the ADP site. Residues Thr271, Gly315, Gln319, and Gly416 each coordinate ATP. Gly416 and Asn420 together coordinate ADP.

This sequence belongs to the FGGY kinase family.

The enzyme catalyses glycerol + ATP = sn-glycerol 3-phosphate + ADP + H(+). It participates in polyol metabolism; glycerol degradation via glycerol kinase pathway; sn-glycerol 3-phosphate from glycerol: step 1/1. With respect to regulation, inhibited by fructose 1,6-bisphosphate (FBP). Its function is as follows. Key enzyme in the regulation of glycerol uptake and metabolism. Catalyzes the phosphorylation of glycerol to yield sn-glycerol 3-phosphate. This Mycobacteroides abscessus (strain ATCC 19977 / DSM 44196 / CCUG 20993 / CIP 104536 / JCM 13569 / NCTC 13031 / TMC 1543 / L948) (Mycobacterium abscessus) protein is Glycerol kinase.